The chain runs to 452 residues: Phosphoglucosamine mutase (452 aa).

Serine 104 functions as the Phosphoserine intermediate in the catalytic mechanism. Serine 104, aspartate 246, aspartate 248, and aspartate 250 together coordinate Mg(2+). The residue at position 104 (serine 104) is a Phosphoserine.

The protein belongs to the phosphohexose mutase family. Mg(2+) is required as a cofactor. Post-translationally, activated by phosphorylation.

The catalysed reaction is alpha-D-glucosamine 1-phosphate = D-glucosamine 6-phosphate. Catalyzes the conversion of glucosamine-6-phosphate to glucosamine-1-phosphate. This Streptomyces avermitilis (strain ATCC 31267 / DSM 46492 / JCM 5070 / NBRC 14893 / NCIMB 12804 / NRRL 8165 / MA-4680) protein is Phosphoglucosamine mutase.